Here is a 283-residue protein sequence, read N- to C-terminus: Foldase protein PrsA 3 (283 aa).

The first 21 residues, 1-21 (MKKKKIFIGTIISCVMLALSA), serve as a signal peptide directing secretion. A lipid anchor (N-palmitoyl cysteine) is attached at C22. A lipid anchor (S-diacylglycerol cysteine) is attached at C22. The 91-residue stretch at 132–222 (KPEMKVSHIL…YGYHIIKVTD (91 aa)) folds into the PpiC domain.

This sequence belongs to the PrsA family.

The protein localises to the cell membrane. The catalysed reaction is [protein]-peptidylproline (omega=180) = [protein]-peptidylproline (omega=0). Plays a major role in protein secretion by helping the post-translocational extracellular folding of several secreted proteins. The sequence is that of Foldase protein PrsA 3 (prsA3) from Bacillus cereus (strain ATCC 14579 / DSM 31 / CCUG 7414 / JCM 2152 / NBRC 15305 / NCIMB 9373 / NCTC 2599 / NRRL B-3711).